Consider the following 168-residue polypeptide: DAZ-associated protein 2 (168 aa).

Residues 1–13 (MNSKGQYPTQPTY) show a composition bias toward low complexity. The interval 1–25 (MNSKGQYPTQPTYPVQPPGNPVYPQ) is disordered. Positions 39–42 (PPAY) match the PPAY motif. Phosphoserine is present on serine 77.

As to quaternary structure, interacts with SOX6. Interacts with DAZ1 and DAZL. Interacts with IL17RB. May interact with FAM168B. Interacts with INCA1. Interacts with EIF4G1 and EIF4G2. Interacts (via PPAY motif) with NEDD4 (via WW domains). Interacts with transcription factor TCF4; the interaction results in localization of DAZAP2 to the nucleus. Interacts with transcription factors TCF7 and TCF7L1. Interacts with transcription factor LEF1. Interacts with serine/threonine-protein kinase HIPK2; the interaction results in phosphorylation of DAZAP2 which causes localization of DAZAP2 to the nucleus, reduces interaction of DAZAP2 with HIPK2 and prevents DAZAP2-dependent degradation of HIPK2. Interacts with ubiquitin ligase SIAH1; the interaction is decreased following phosphorylation of DAZAP2 by HIPK2. Interacts with TP53; the interaction is triggered by DNA damage. Post-translationally, ubiquitinated by SMURF2, leading to proteasomal degradation. Ubiquitinated by NEDD4, leading to proteasomal degradation. In terms of processing, following DNA damage, phosphorylated by HIPK2 which promotes DAZAP2 localization to the nucleus, reduces interaction of DAZAP2 with HIPK2 and SIAH1, and prevents DAZAP2-dependent ubiquitination of HIPK2 by E3 ubiquitin-protein ligase SIAH1 and subsequent HIPK2 proteasomal degradation.

The protein localises to the cytoplasm. Its subcellular location is the nucleus. It localises to the nucleus speckle. It is found in the nuclear body. The protein resides in the stress granule. Functionally, in unstressed cells, promotes SIAH1-mediated polyubiquitination and degradation of the serine/threonine-protein kinase HIPK2, probably by acting as a loading factor that potentiates complex formation between HIPK2 and ubiquitin ligase SIAH1. In response to DNA damage, localizes to the nucleus following phosphorylation by HIPK2 and modulates the expression of a subset of TP53/p53 target genes by binding to TP53 at target gene promoters. This limits the expression of a number of cell death-mediating TP53 target genes, reducing DNA damage-induced cell death. Enhances the binding of transcription factor TCF7L2/TCF4, a Wnt signaling pathway effector, to the promoters of target genes. Plays a role in stress granule formation. The protein is DAZ-associated protein 2 of Macaca fascicularis (Crab-eating macaque).